Here is a 198-residue protein sequence, read N- to C-terminus: MDSHERVAQLFHDSIRAKQDALDRIAPDIVRAGRAMARALGADRKILICGNGGSAADAQHFSSELLNRFEMERPGLPAIALTTDSSTLTSVANDYHYDEVFGRQIRALGHEGDILLAISTSGGSGNIVAAQQAAAERGMITVALSGRDGGTLAETLSAEDIEIRVPSETTARIQEVHLLVIHCLCDLIDRTLFGGPGG.

Residues 36-198 (MARALGADRK…DRTLFGGPGG (163 aa)) enclose the SIS domain. Position 51–53 (51–53 (NGG)) interacts with substrate. Residues H60 and E64 each coordinate Zn(2+). Residues E64, 93–94 (ND), 119–121 (STS), S124, and Q174 contribute to the substrate site. Zn(2+) contacts are provided by Q174 and H182.

This sequence belongs to the SIS family. GmhA subfamily. As to quaternary structure, homotetramer. Zn(2+) is required as a cofactor.

It localises to the cytoplasm. The catalysed reaction is 2 D-sedoheptulose 7-phosphate = D-glycero-alpha-D-manno-heptose 7-phosphate + D-glycero-beta-D-manno-heptose 7-phosphate. It participates in carbohydrate biosynthesis; D-glycero-D-manno-heptose 7-phosphate biosynthesis; D-glycero-alpha-D-manno-heptose 7-phosphate and D-glycero-beta-D-manno-heptose 7-phosphate from sedoheptulose 7-phosphate: step 1/1. Catalyzes the isomerization of sedoheptulose 7-phosphate in D-glycero-D-manno-heptose 7-phosphate. The sequence is that of Phosphoheptose isomerase from Halorhodospira halophila (strain DSM 244 / SL1) (Ectothiorhodospira halophila (strain DSM 244 / SL1)).